Consider the following 499-residue polypeptide: Cytosol aminopeptidase (499 aa).

Residues Lys267 and Asp272 each contribute to the Mn(2+) site. Lys279 is an active-site residue. The Mn(2+) site is built by Asp290, Asp349, and Glu351. Arg353 is a catalytic residue.

Belongs to the peptidase M17 family. Mn(2+) is required as a cofactor.

Its subcellular location is the cytoplasm. It carries out the reaction Release of an N-terminal amino acid, Xaa-|-Yaa-, in which Xaa is preferably Leu, but may be other amino acids including Pro although not Arg or Lys, and Yaa may be Pro. Amino acid amides and methyl esters are also readily hydrolyzed, but rates on arylamides are exceedingly low.. The enzyme catalyses Release of an N-terminal amino acid, preferentially leucine, but not glutamic or aspartic acids.. Its function is as follows. Presumably involved in the processing and regular turnover of intracellular proteins. Catalyzes the removal of unsubstituted N-terminal amino acids from various peptides. The protein is Cytosol aminopeptidase (pepA) of Buchnera aphidicola subsp. Acyrthosiphon pisum (strain APS) (Acyrthosiphon pisum symbiotic bacterium).